A 143-amino-acid chain; its full sequence is uncharacterized protein (143 aa).

This is an uncharacterized protein from Archaeoglobus fulgidus (strain ATCC 49558 / DSM 4304 / JCM 9628 / NBRC 100126 / VC-16).